Consider the following 131-residue polypeptide: Cell cycle protein GpsB (131 aa).

The stretch at 39–76 (LDGIIRDYEAFTNEIDRLKEENTKLFSRVDELTKQLSV) forms a coiled coil. Positions 111–131 (KLSDSSVDNHDDGNHSDVDQY) are disordered. Basic and acidic residues predominate over residues 117-131 (VDNHDDGNHSDVDQY).

It belongs to the GpsB family. Forms polymers through the coiled coil domains. Interacts with PBP1, MreC and EzrA.

Its subcellular location is the cytoplasm. Functionally, divisome component that associates with the complex late in its assembly, after the Z-ring is formed, and is dependent on DivIC and PBP2B for its recruitment to the divisome. Together with EzrA, is a key component of the system that regulates PBP1 localization during cell cycle progression. Its main role could be the removal of PBP1 from the cell pole after pole maturation is completed. Also contributes to the recruitment of PBP1 to the division complex. Not essential for septum formation. The protein is Cell cycle protein GpsB of Lacticaseibacillus casei (strain BL23) (Lactobacillus casei).